The primary structure comprises 346 residues: Ribosomal RNA small subunit methyltransferase H (346 aa).

S-adenosyl-L-methionine contacts are provided by residues 46–48 (GGY), Asp-63, Phe-90, Asp-113, and Gln-120. Positions 270-346 (GGSAGSRHMP…LPETNELARS (77 aa)) are disordered.

This sequence belongs to the methyltransferase superfamily. RsmH family.

It is found in the cytoplasm. It carries out the reaction cytidine(1402) in 16S rRNA + S-adenosyl-L-methionine = N(4)-methylcytidine(1402) in 16S rRNA + S-adenosyl-L-homocysteine + H(+). Specifically methylates the N4 position of cytidine in position 1402 (C1402) of 16S rRNA. The polypeptide is Ribosomal RNA small subunit methyltransferase H (Brucella suis (strain ATCC 23445 / NCTC 10510)).